The sequence spans 235 residues: UPF0173 metal-dependent hydrolase mll0680 (235 aa).

It belongs to the UPF0173 family.

The sequence is that of UPF0173 metal-dependent hydrolase mll0680 from Mesorhizobium japonicum (strain LMG 29417 / CECT 9101 / MAFF 303099) (Mesorhizobium loti (strain MAFF 303099)).